A 313-amino-acid polypeptide reads, in one-letter code: Ribosomal RNA small subunit methyltransferase H (313 aa).

S-adenosyl-L-methionine-binding positions include 35–37 (GGH), Asp55, Phe81, Asp103, and Gln110.

Belongs to the methyltransferase superfamily. RsmH family.

The protein localises to the cytoplasm. The enzyme catalyses cytidine(1402) in 16S rRNA + S-adenosyl-L-methionine = N(4)-methylcytidine(1402) in 16S rRNA + S-adenosyl-L-homocysteine + H(+). Specifically methylates the N4 position of cytidine in position 1402 (C1402) of 16S rRNA. In Pseudomonas aeruginosa (strain LESB58), this protein is Ribosomal RNA small subunit methyltransferase H.